Here is a 314-residue protein sequence, read N- to C-terminus: Homeobox protein SIX3 (314 aa).

The homeobox DNA-binding region spans 188-247; sequence GEQKTHCFKERTRSLLREWYLQDPYPNPSKKRELAQATGLTPTQVGNWFKNRRQRDRAAA. Disordered stretches follow at residues 214-233 and 240-314; these read NPSK…TQVG and RQRD…ECDV. Over residues 271–293 the composition is skewed to low complexity; that stretch reads PTHSSAESPSTAASPTTSVSSLT. Positions 298–314 are enriched in polar residues; it reads TGTSILSVTSSDSECDV.

Belongs to the SIX/Sine oculis homeobox family.

It localises to the nucleus. Transcriptional regulator which can act as both a transcriptional repressor and activator by binding a ATTA homeodomain core recognition sequence on these target genes. During forebrain development represses WNT1 expression allowing zona limitans intrathalamica formation and thereby ensuring proper anterio-posterior patterning of the diencephalon and formation of the rostral diencephalon. Acts as a direct upstream activator of SHH expression in the rostral diencephalon ventral midline and that in turn SHH maintains its expression. In addition, Six3 activity is required for the formation of the telencephalon. During postnatal stages of brain development is necessary for ependymal cell maturation by promoting the maturation of radial glia into ependymal cells through regulation of neuroblast proliferation and migration. Acts on the proliferation and differentiation of neural progenitor cells through activating transcription of CCND1 and CCND2. During early lens formation plays a role in lens induction and specification by activating directly PAX6 in the presumptive lens ectoderm. In turn PAX6 activates SIX3 resulting in activation of PDGFRA and CCND1 promoting cell proliferation. Also is required for the neuroretina development by directly suppressing WNT8B expression in the anterior neural plate territory. Its action during retina development and lens morphogenesis is AES and TLE4-dependent manner. Furthermore, during eye development regulates several genes expression. Before and during early lens development represses the CRYGF promoter by binding a SIX repressor element. Directly activates RHO transcription, or cooperates with CRX or NRL. Six3 also functions in the formation of the proximodistal axis of the optic cup, and promotes the formation of optic vesicles-like structures. During pituitary development, acts in parallel or alternatively with HESX1 to control cell proliferation through Wnt/beta-catenin pathway. Plays a role in eye development by suppressing WNT1 expression and in dorsal-ventral patterning by repressing BMP signaling pathway. This is Homeobox protein SIX3 (SIX3) from Gallus gallus (Chicken).